The sequence spans 631 residues: Phosphomethylpyrimidine synthase (631 aa).

Substrate-binding positions include Asn-239, Met-268, Tyr-297, His-333, 353 to 355 (SRG), 394 to 397 (DGLR), and Glu-433. His-437 contributes to the Zn(2+) binding site. Residue Tyr-460 coordinates substrate. Zn(2+) is bound at residue His-501. Residues Cys-581, Cys-584, and Cys-589 each coordinate [4Fe-4S] cluster.

Belongs to the ThiC family. As to quaternary structure, homodimer. Requires [4Fe-4S] cluster as cofactor.

It carries out the reaction 5-amino-1-(5-phospho-beta-D-ribosyl)imidazole + S-adenosyl-L-methionine = 4-amino-2-methyl-5-(phosphooxymethyl)pyrimidine + CO + 5'-deoxyadenosine + formate + L-methionine + 3 H(+). Its pathway is cofactor biosynthesis; thiamine diphosphate biosynthesis. Catalyzes the synthesis of the hydroxymethylpyrimidine phosphate (HMP-P) moiety of thiamine from aminoimidazole ribotide (AIR) in a radical S-adenosyl-L-methionine (SAM)-dependent reaction. This is Phosphomethylpyrimidine synthase from Salmonella typhi.